The sequence spans 347 residues: VIP36-like protein (347 aa).

An N-terminal signal peptide occupies residues Met1–Ala43. Residues Gly44–Ala312 lie on the Lumenal side of the membrane. Positions Glu48–Leu273 constitute an L-type lectin-like domain. Positions 92 and 127 each coordinate a carbohydrate. Positions 158, 160, and 162 each coordinate Ca(2+). Tyr160–Asn162 is an a carbohydrate binding site. N-linked (GlcNAc...) asparagine glycosylation is present at Asn180. A carbohydrate is bound at residue His187. Residue Asp190 participates in Ca(2+) binding. A disulfide bridge connects residues Cys199 and Cys236. Residue Gly257–Leu259 coordinates a carbohydrate. Residues Leu313–Tyr335 form a helical membrane-spanning segment. The Cytoplasmic portion of the chain corresponds to Asn336–Tyr347. The Endoplasmic reticulum retention signal signature appears at Arg343–Arg345.

The protein resides in the endoplasmic reticulum membrane. Its subcellular location is the golgi apparatus membrane. May be involved in the regulation of export from the endoplasmic reticulum of a subset of glycoproteins. May function as a regulator of ERGIC-53. The chain is VIP36-like protein (Lman2l) from Mus musculus (Mouse).